The following is a 138-amino-acid chain: Large ribosomal subunit protein uL16c (138 aa).

It belongs to the universal ribosomal protein uL16 family. In terms of assembly, part of the 50S ribosomal subunit.

The protein localises to the plastid. It localises to the chloroplast. In Tetradesmus obliquus (Green alga), this protein is Large ribosomal subunit protein uL16c.